Consider the following 482-residue polypeptide: tRNA sulfurtransferase (482 aa).

The 105-residue stretch at 61–165 folds into the THUMP domain; the sequence is KETLEVLTQT…NDKLNQVIER (105 aa). ATP is bound by residues 183–184, K265, G287, and Q296; that span reads LI. The cysteines at positions 344 and 456 are disulfide-linked. The Rhodanese domain maps to 404 to 482; sequence VAEHAVVLDI…GFHNVKVYRP (79 aa). C456 (cysteine persulfide intermediate) is an active-site residue.

It belongs to the ThiI family.

Its subcellular location is the cytoplasm. It catalyses the reaction [ThiI sulfur-carrier protein]-S-sulfanyl-L-cysteine + a uridine in tRNA + 2 reduced [2Fe-2S]-[ferredoxin] + ATP + H(+) = [ThiI sulfur-carrier protein]-L-cysteine + a 4-thiouridine in tRNA + 2 oxidized [2Fe-2S]-[ferredoxin] + AMP + diphosphate. It carries out the reaction [ThiS sulfur-carrier protein]-C-terminal Gly-Gly-AMP + S-sulfanyl-L-cysteinyl-[cysteine desulfurase] + AH2 = [ThiS sulfur-carrier protein]-C-terminal-Gly-aminoethanethioate + L-cysteinyl-[cysteine desulfurase] + A + AMP + 2 H(+). It functions in the pathway cofactor biosynthesis; thiamine diphosphate biosynthesis. In terms of biological role, catalyzes the ATP-dependent transfer of a sulfur to tRNA to produce 4-thiouridine in position 8 of tRNAs, which functions as a near-UV photosensor. Also catalyzes the transfer of sulfur to the sulfur carrier protein ThiS, forming ThiS-thiocarboxylate. This is a step in the synthesis of thiazole, in the thiamine biosynthesis pathway. The sulfur is donated as persulfide by IscS. In Vibrio atlanticus (strain LGP32) (Vibrio splendidus (strain Mel32)), this protein is tRNA sulfurtransferase.